The following is a 526-amino-acid chain: 1,4-beta-D-glucan cellobiohydrolase B (526 aa).

A signal peptide spans 1–23 (MASSFQLYKALLFFSSLLSAVQA). The tract at residues 24–458 (QKVGTQQAEV…SNIKFGPIGS (435 aa)) is catalytic. Catalysis depends on E235, which acts as the Nucleophile. Residue E240 is the Proton donor of the active site. 2 N-linked (GlcNAc...) asparagine glycosylation sites follow: N293 and N400. Residues 459 to 490 (TFGNGGGSGPTTTVTTSTATSTTSSATSTATG) form a ser/Thr-rich linker region. The segment at 464-488 (GGSGPTTTVTTSTATSTTSSATSTA) is disordered. The segment covering 468 to 488 (PTTTVTTSTATSTTSSATSTA) has biased composition (low complexity). Positions 490-526 (GQAQHWEQCGGNGWTGPTVCASPWACTVVNSWYSQCL) constitute a CBM1 domain. 2 disulfide bridges follow: C498-C515 and C509-C525.

Belongs to the glycosyl hydrolase 7 (cellulase C) family.

It localises to the secreted. The enzyme catalyses Hydrolysis of (1-&gt;4)-beta-D-glucosidic linkages in cellulose and cellotetraose, releasing cellobiose from the non-reducing ends of the chains.. Functionally, the biological conversion of cellulose to glucose generally requires three types of hydrolytic enzymes: (1) Endoglucanases which cut internal beta-1,4-glucosidic bonds; (2) Exocellobiohydrolases that cut the disaccharide cellobiose from the non-reducing end of the cellulose polymer chain; (3) Beta-1,4-glucosidases which hydrolyze the cellobiose and other short cello-oligosaccharides to glucose. In Emericella nidulans (strain FGSC A4 / ATCC 38163 / CBS 112.46 / NRRL 194 / M139) (Aspergillus nidulans), this protein is 1,4-beta-D-glucan cellobiohydrolase B (cbhB).